The sequence spans 152 residues: Large ribosomal subunit protein bL34c (152 aa).

Residues Met1 to Ala91 constitute a chloroplast transit peptide.

As to quaternary structure, component of the chloroplast large ribosomal subunit (LSU). Mature 70S chloroplast ribosomes of higher plants consist of a small (30S) and a large (50S) subunit. The 30S small subunit contains 1 molecule of ribosomal RNA (16S rRNA) and 24 different proteins. The 50S large subunit contains 3 rRNA molecules (23S, 5S and 4.5S rRNA) and 33 different proteins.

The protein resides in the plastid. Its subcellular location is the chloroplast. Component of the chloroplast ribosome (chloro-ribosome), a dedicated translation machinery responsible for the synthesis of chloroplast genome-encoded proteins, including proteins of the transcription and translation machinery and components of the photosynthetic apparatus. This is Large ribosomal subunit protein bL34c (RPL34) from Spinacia oleracea (Spinach).